Reading from the N-terminus, the 373-residue chain is Histidinol-phosphate aminotransferase (373 aa).

Lys-230 is subject to N6-(pyridoxal phosphate)lysine.

Belongs to the class-II pyridoxal-phosphate-dependent aminotransferase family. Histidinol-phosphate aminotransferase subfamily. In terms of assembly, homodimer. Pyridoxal 5'-phosphate serves as cofactor.

The enzyme catalyses L-histidinol phosphate + 2-oxoglutarate = 3-(imidazol-4-yl)-2-oxopropyl phosphate + L-glutamate. It functions in the pathway amino-acid biosynthesis; L-histidine biosynthesis; L-histidine from 5-phospho-alpha-D-ribose 1-diphosphate: step 7/9. This Synechococcus sp. (strain ATCC 27144 / PCC 6301 / SAUG 1402/1) (Anacystis nidulans) protein is Histidinol-phosphate aminotransferase.